The sequence spans 445 residues: Phosphoglucosamine mutase 1 (445 aa).

Residue serine 102 is the Phosphoserine intermediate of the active site. Positions 102, 241, 243, and 245 each coordinate Mg(2+). At serine 102 the chain carries Phosphoserine.

Belongs to the phosphohexose mutase family. Mg(2+) is required as a cofactor. Post-translationally, activated by phosphorylation.

It carries out the reaction alpha-D-glucosamine 1-phosphate = D-glucosamine 6-phosphate. Its function is as follows. Catalyzes the conversion of glucosamine-6-phosphate to glucosamine-1-phosphate. In Shewanella sp. (strain MR-4), this protein is Phosphoglucosamine mutase 1.